Reading from the N-terminus, the 354-residue chain is tRNA-specific 2-thiouridylase MnmA (354 aa).

ATP is bound by residues 6 to 13 (LLSGGVDS) and leucine 33. The active-site Nucleophile is cysteine 100. An intrachain disulfide couples cysteine 100 to cysteine 195. Glycine 123 provides a ligand contact to ATP. The interaction with tRNA stretch occupies residues 145-147 (KDQ). Cysteine 195 acts as the Cysteine persulfide intermediate in catalysis.

This sequence belongs to the MnmA/TRMU family.

The protein resides in the cytoplasm. It catalyses the reaction S-sulfanyl-L-cysteinyl-[protein] + uridine(34) in tRNA + AH2 + ATP = 2-thiouridine(34) in tRNA + L-cysteinyl-[protein] + A + AMP + diphosphate + H(+). Its function is as follows. Catalyzes the 2-thiolation of uridine at the wobble position (U34) of tRNA, leading to the formation of s(2)U34. The protein is tRNA-specific 2-thiouridylase MnmA of Borrelia hermsii (strain HS1 / DAH).